Reading from the N-terminus, the 344-residue chain is Dihydroorotate dehydrogenase (quinone) (344 aa).

Residues 65 to 69 (AGLDK) and Thr89 each bind FMN. Lys69 provides a ligand contact to substrate. 114 to 118 (NRMGF) contacts substrate. FMN is bound by residues Asn145 and Asn178. Residue Asn178 coordinates substrate. The active-site Nucleophile is the Ser181. Asn183 serves as a coordination point for substrate. FMN contacts are provided by Lys223 and Thr251. Position 252–253 (252–253 (NT)) interacts with substrate. Residues Gly274, Gly303, and 324-325 (YS) each bind FMN.

The protein belongs to the dihydroorotate dehydrogenase family. Type 2 subfamily. As to quaternary structure, monomer. FMN serves as cofactor.

Its subcellular location is the cell membrane. The catalysed reaction is (S)-dihydroorotate + a quinone = orotate + a quinol. Its pathway is pyrimidine metabolism; UMP biosynthesis via de novo pathway; orotate from (S)-dihydroorotate (quinone route): step 1/1. Its function is as follows. Catalyzes the conversion of dihydroorotate to orotate with quinone as electron acceptor. In Cupriavidus taiwanensis (strain DSM 17343 / BCRC 17206 / CCUG 44338 / CIP 107171 / LMG 19424 / R1) (Ralstonia taiwanensis (strain LMG 19424)), this protein is Dihydroorotate dehydrogenase (quinone).